Consider the following 535-residue polypeptide: Glucose-6-phosphate isomerase (535 aa).

Glu-347 acts as the Proton donor in catalysis. Residues His-378 and Lys-493 contribute to the active site.

This sequence belongs to the GPI family.

It is found in the cytoplasm. The enzyme catalyses alpha-D-glucose 6-phosphate = beta-D-fructose 6-phosphate. It participates in carbohydrate biosynthesis; gluconeogenesis. Its pathway is carbohydrate degradation; glycolysis; D-glyceraldehyde 3-phosphate and glycerone phosphate from D-glucose: step 2/4. In terms of biological role, catalyzes the reversible isomerization of glucose-6-phosphate to fructose-6-phosphate. In Chlamydia felis (strain Fe/C-56) (Chlamydophila felis), this protein is Glucose-6-phosphate isomerase.